We begin with the raw amino-acid sequence, 130 residues long: Small ribosomal subunit protein uS11c (130 aa).

This sequence belongs to the universal ribosomal protein uS11 family. Part of the 30S ribosomal subunit.

Its subcellular location is the plastid. The protein localises to the chloroplast. This chain is Small ribosomal subunit protein uS11c, found in Spirogyra maxima (Green alga).